The primary structure comprises 420 residues: Bicoumarin synthase ktnC (420 aa).

Heme is bound at residue Cys362.

It belongs to the cytochrome P450 family. Heme is required as a cofactor.

It catalyses the reaction 2 7-demethylsiderin + NADPH + O2 = orlandin + NADP(+) + 2 H2O. The protein operates within secondary metabolite biosynthesis. Its function is as follows. Non-reducing polyketide synthase; part of the gene cluster that mediates the biosynthesis of the bicoumarin kotanin. The non-reducing polyketide synthase ktnS first catalyzes the formation of the pentaketidic 4,7-dihydroxy-5-methylcoumarin from acetyl coenzyme A and 4 malonyl coenzyme A molecules. Further O-methylation by ktnB leads to the formation of 7-demethylsiderin. Then, an oxidative phenol coupling catalyzed by the cytochrome P450 monooxygenase ktnC forms the 8,8'-dimer P-orlandin via dimerization the monomeric precursor, 7-demethylsiderin. P-orlandin is subsequently O-methylated in a stepwise fashion to demethylkotanin and kotanin. The protein is Bicoumarin synthase ktnC of Aspergillus niger (strain ATCC MYA-4892 / CBS 513.88 / FGSC A1513).